Consider the following 45-residue polypeptide: Large ribosomal subunit protein bL34 (45 aa).

It belongs to the bacterial ribosomal protein bL34 family.

This Paenarthrobacter aurescens (strain TC1) protein is Large ribosomal subunit protein bL34.